A 396-amino-acid chain; its full sequence is 1-deoxy-D-xylulose 5-phosphate reductoisomerase (396 aa).

NADPH contacts are provided by Thr-10, Gly-11, Ser-12, Ile-13, Gln-38, and Asn-124. Lys-125 is a 1-deoxy-D-xylulose 5-phosphate binding site. Glu-126 contacts NADPH. Position 150 (Asp-150) interacts with Mn(2+). 1-deoxy-D-xylulose 5-phosphate-binding residues include Ser-151, Glu-152, Ser-179, and His-202. Glu-152 contributes to the Mn(2+) binding site. Gly-208 serves as a coordination point for NADPH. Ser-215, Asn-220, Lys-221, and Glu-224 together coordinate 1-deoxy-D-xylulose 5-phosphate. Glu-224 contributes to the Mn(2+) binding site.

This sequence belongs to the DXR family. Mg(2+) is required as a cofactor. The cofactor is Mn(2+).

The enzyme catalyses 2-C-methyl-D-erythritol 4-phosphate + NADP(+) = 1-deoxy-D-xylulose 5-phosphate + NADPH + H(+). It participates in isoprenoid biosynthesis; isopentenyl diphosphate biosynthesis via DXP pathway; isopentenyl diphosphate from 1-deoxy-D-xylulose 5-phosphate: step 1/6. Catalyzes the NADPH-dependent rearrangement and reduction of 1-deoxy-D-xylulose-5-phosphate (DXP) to 2-C-methyl-D-erythritol 4-phosphate (MEP). The protein is 1-deoxy-D-xylulose 5-phosphate reductoisomerase of Ralstonia pickettii (strain 12J).